Here is a 176-residue protein sequence, read N- to C-terminus: MKFLFDLFPIILFFAAFKLWGIFTATAVAIAATLAQVAWVAFRHRKVDTMLWVSLGVIVVFGGATLVLHDEKFIQWKPTVLYWLFAVGLVAARYAFGKNLIEKMMGKQLTLPEPVWDKLNLAWAAFFAALGVTNLYVVRNFTESQWVNFKLFGTTGAIIVFVILQSLWLAKYLKGE.

Transmembrane regions (helical) follow at residues 3 to 23 (FLFDLFPIILFFAAFKLWGIF), 49 to 69 (TMLWVSLGVIVVFGGATLVLH), 72 to 92 (KFIQWKPTVLYWLFAVGLVAA), 118 to 138 (KLNLAWAAFFAALGVTNLYVV), and 149 to 169 (FKLFGTTGAIIVFVILQSLWL).

Belongs to the YciB family.

It is found in the cell inner membrane. Functionally, plays a role in cell envelope biogenesis, maintenance of cell envelope integrity and membrane homeostasis. This is Inner membrane-spanning protein YciB from Burkholderia thailandensis (strain ATCC 700388 / DSM 13276 / CCUG 48851 / CIP 106301 / E264).